The sequence spans 1048 residues: Putative cation efflux system protein SilA (1048 aa).

Helical transmembrane passes span phenylalanine 14 to threonine 34, valine 125 to valine 145, leucine 338 to tryptophan 358, alanine 363 to phenylalanine 383, methionine 391 to isoleucine 411, valine 446 to threonine 466, serine 485 to isoleucine 505, threonine 539 to glycine 559, glycine 737 to glycine 757, lysine 871 to phenylalanine 891, alanine 897 to tryptophan 917, threonine 928 to leucine 948, alanine 985 to glycine 1005, and isoleucine 1012 to proline 1032.

The protein belongs to the resistance-nodulation-cell division (RND) (TC 2.A.6) family.

It is found in the cell inner membrane. Functionally, component of the sil cation-efflux system that confers resistance to silver. May be part of a three-component cation/proton antiporter. In Salmonella typhimurium, this protein is Putative cation efflux system protein SilA (silA).